The chain runs to 285 residues: Probable endonuclease 4 (285 aa).

His69, His109, Glu145, Asp179, His182, His216, Asp229, His231, and Glu261 together coordinate Zn(2+).

This sequence belongs to the AP endonuclease 2 family. It depends on Zn(2+) as a cofactor.

The catalysed reaction is Endonucleolytic cleavage to 5'-phosphooligonucleotide end-products.. Its function is as follows. Endonuclease IV plays a role in DNA repair. It cleaves phosphodiester bonds at apurinic or apyrimidinic (AP) sites, generating a 3'-hydroxyl group and a 5'-terminal sugar phosphate. The chain is Probable endonuclease 4 from Salmonella schwarzengrund (strain CVM19633).